The chain runs to 589 residues: MVAPMYGSPGGRLARAVTRALALALVLALLVGLFLSGLTGAIPTPRGQRGRGMPVPPASRCRSLLLDPETGQLRLVDGRHPDAVAWANLTNAIRETGWAFLELHTNGRFNDSLQAYAAGVVEAAVSEELIYMYWMNTVVNYCGPFEYEVGYCERLKNFLEANLEWMQKEMELNNGSAYWHQVRLTLLQLKGLEDSYEGSVAFPTGKFTVKPLGFLLLQISGDLEDLEVALNKTKTNHAMGSGSCSALIKLLPGQRDLLVAHNTWHSYQYMLRIMKKYWFQFREGPQAESTRAPGNKVIFSSYPGTIFSCDDFYILGSGLVTLETTIGNKNPALWKYVQPTGCVLEWMRNVVANRLALDGDSWADIFKRFNSGTYNNQWMIVDYKAFVPGGPSPGRRVLTVLEQIPGMVVVADRTSELYQKTYWASYNIPSFESVFNASGLPALVARYGPWFSYDGSPRAQIFRRNHSLVHDLDSMMRLMRYNDFLHDPLSLCKACTPKPNGENAISARSDLNPANGSYPFQALHQRSHGGIDVKVTSTALAKALRLLAVSGPTWDQLPPFQWSTSPFSGMLHMGQPDLRKFSPIEVSWD.

Residues 1-41 (MVAPMYGSPGGRLARAVTRALALALVLALLVGLFLSGLTGA) form the signal peptide. N-linked (GlcNAc...) asparagine glycosylation is found at N88 and N110. C142 and C152 are disulfide-bonded. 4 N-linked (GlcNAc...) asparagine glycosylation sites follow: N174, N231, N436, and N465. The cysteines at positions 492 and 495 are disulfide-linked. N515 is a glycosylation site (N-linked (GlcNAc...) asparagine).

This sequence belongs to the phospholipase B-like family. Interacts with IGF2R. Glycosylated; contains mannose 6-phosphate sugars.

It localises to the lysosome lumen. Functionally, putative phospholipase. This Bos taurus (Bovine) protein is Putative phospholipase B-like 2 (PLBD2).